The following is an 85-amino-acid chain: U4-theraphotoxin-Hhn1a (85 aa).

The signal sequence occupies residues 1 to 22 (MKMTLIAILTCAAVLVLHTTAA). Positions 23-48 (EELEAESQLMEVGMPDTELAAVDEER) are excised as a propeptide. 3 disulfide bridges follow: Cys52–Cys66, Cys56–Cys77, and Cys71–Cys82.

It belongs to the neurotoxin 12 (Hwtx-2) family. 02 (Hwtx-2) subfamily. Monomer. In terms of tissue distribution, expressed by the venom gland.

The protein localises to the secreted. Its function is as follows. Neurotoxin active on both insects and mammals. This Cyriopagopus hainanus (Chinese bird spider) protein is U4-theraphotoxin-Hhn1a.